The chain runs to 149 residues: Transcriptional repressor NrdR (149 aa).

The segment at 3 to 34 is a zinc-finger region; the sequence is CPFCTAVDTKVIDSRLVGDGSQVRRRRQCLVC. An ATP-cone domain is found at 49 to 139; that stretch reads PRVVKSDEIR…VYRSFEDVRD (91 aa).

Belongs to the NrdR family. It depends on Zn(2+) as a cofactor.

Negatively regulates transcription of bacterial ribonucleotide reductase nrd genes and operons by binding to NrdR-boxes. The sequence is that of Transcriptional repressor NrdR from Proteus mirabilis (strain HI4320).